Reading from the N-terminus, the 68-residue chain is Small ribosomal subunit protein bS21 (68 aa).

It belongs to the bacterial ribosomal protein bS21 family.

In Ruegeria pomeroyi (strain ATCC 700808 / DSM 15171 / DSS-3) (Silicibacter pomeroyi), this protein is Small ribosomal subunit protein bS21.